A 156-amino-acid chain; its full sequence is ATP synthase subunit b (156 aa).

A helical membrane pass occupies residues 7–27 (LFVQAIVFLILVWFTMQFVWP).

Belongs to the ATPase B chain family. F-type ATPases have 2 components, F(1) - the catalytic core - and F(0) - the membrane proton channel. F(1) has five subunits: alpha(3), beta(3), gamma(1), delta(1), epsilon(1). F(0) has three main subunits: a(1), b(2) and c(10-14). The alpha and beta chains form an alternating ring which encloses part of the gamma chain. F(1) is attached to F(0) by a central stalk formed by the gamma and epsilon chains, while a peripheral stalk is formed by the delta and b chains.

It is found in the cell inner membrane. Its function is as follows. F(1)F(0) ATP synthase produces ATP from ADP in the presence of a proton or sodium gradient. F-type ATPases consist of two structural domains, F(1) containing the extramembraneous catalytic core and F(0) containing the membrane proton channel, linked together by a central stalk and a peripheral stalk. During catalysis, ATP synthesis in the catalytic domain of F(1) is coupled via a rotary mechanism of the central stalk subunits to proton translocation. In terms of biological role, component of the F(0) channel, it forms part of the peripheral stalk, linking F(1) to F(0). This chain is ATP synthase subunit b, found in Verminephrobacter eiseniae (strain EF01-2).